Reading from the N-terminus, the 307-residue chain is Pseudouridine-5'-phosphate glycosidase (307 aa).

Glu-28 functions as the Proton donor in the catalytic mechanism. Lys-89 and Val-109 together coordinate substrate. Residue Asp-141 coordinates Mn(2+). Substrate is bound at residue 143–145 (SAD). Lys-162 functions as the Nucleophile in the catalytic mechanism.

This sequence belongs to the pseudouridine-5'-phosphate glycosidase family. Homotrimer. Mn(2+) serves as cofactor.

The catalysed reaction is D-ribose 5-phosphate + uracil = psi-UMP + H2O. Functionally, catalyzes the reversible cleavage of pseudouridine 5'-phosphate (PsiMP) to ribose 5-phosphate and uracil. Functions biologically in the cleavage direction, as part of a pseudouridine degradation pathway. The sequence is that of Pseudouridine-5'-phosphate glycosidase from Staphylococcus aureus (strain MW2).